A 545-amino-acid chain; its full sequence is B3 domain-containing protein Os03g0620500 (545 aa).

The segment at residues 26–119 is a DNA-binding region (TF-B3 1); the sequence is MKCFHRQMSA…RRASGVQERN (94 aa). A disordered region spans residues 111–188; that stretch reads RASGVQERNA…SSSEHESSYD (78 aa). The segment covering 173–186 has biased composition (basic and acidic residues); that stretch reads EEAKESSSSEHESS. A DNA-binding region (TF-B3 2) is located at residues 231–331; sequence VTTMKHSNVN…RATVHLLRET (101 aa). A disordered region spans residues 368 to 400; that stretch reads RRGTMEPSTTNVKKEADNEQCNNGQGKRQEPLN. A DNA-binding region (TF-B3 3) is located at residues 441–542; sequence YVSIMNKSNV…AMKVHIIRHN (102 aa).

The protein localises to the nucleus. This is B3 domain-containing protein Os03g0620500 from Oryza sativa subsp. japonica (Rice).